We begin with the raw amino-acid sequence, 298 residues long: N-acetylmuramic acid 6-phosphate etherase (298 aa).

The region spanning 55-218 (ITESLRRGGR…STASMVRLGK (164 aa)) is the SIS domain. The Proton donor role is filled by glutamate 83. Residue glutamate 114 is part of the active site.

It belongs to the GCKR-like family. MurNAc-6-P etherase subfamily. As to quaternary structure, homodimer.

The enzyme catalyses N-acetyl-D-muramate 6-phosphate + H2O = N-acetyl-D-glucosamine 6-phosphate + (R)-lactate. Its pathway is amino-sugar metabolism; N-acetylmuramate degradation. Specifically catalyzes the cleavage of the D-lactyl ether substituent of MurNAc 6-phosphate, producing GlcNAc 6-phosphate and D-lactate. In Mycolicibacterium smegmatis (strain ATCC 700084 / mc(2)155) (Mycobacterium smegmatis), this protein is N-acetylmuramic acid 6-phosphate etherase.